A 634-amino-acid chain; its full sequence is Sodium-dependent neutral amino acid transporter B(0)AT1 (634 aa).

Over 1-41 (MVRLVLPNPGLEERIPSLDELEVIEKEEAGSRPKWDNKAQY) the chain is Cytoplasmic. S17 carries the post-translational modification Phosphoserine. Residues 42 to 62 (MLTCVGFCVGLGNVWRFPYLC) form a helical membrane-spanning segment. The Extracellular segment spans residues 63–67 (QSHGG). A helical transmembrane segment spans residues 68–88 (GAFMIPFLILLVFEGIPLLYL). Residues 89-119 (EFAIGQRLRKGSMGVWSSIHPALKGIGIASM) are Cytoplasmic-facing. Residues 120-140 (FVSFMVGLYYNTIIAWVMWYF) traverse the membrane as a helical segment. At 141–192 (FNSFQEPLPWSECPLNQNQTGYVEECAKSSSVDYFWYRETLNISTSISDSGS) the chain is on the extracellular side. 2 N-linked (GlcNAc...) asparagine glycosylation sites follow: N158 and N182. A helical membrane pass occupies residues 193 to 213 (IQWWILLCLTCAWSVLYVCII). The Cytoplasmic segment spans residues 214 to 221 (RGIETTGK). The chain crosses the membrane as a helical span at residues 222-242 (AVYITSTLPYVVLTIFLIRGL). At 243–268 (TLKGATNGIVFLFTPNITELSNPNTW) the chain is on the extracellular side. An N-linked (GlcNAc...) asparagine glycan is attached at N258. A helical transmembrane segment spans residues 269 to 289 (LDAGAQVFYSFSLAFGGLISF). The Cytoplasmic segment spans residues 290 to 304 (SSYNSVHNNCEMDSV). Residues 305-325 (IVSVINGFTSVYAATVVYSII) traverse the membrane as a helical segment. Residues 326–413 (GFRATERFDD…TEAITKMPVS (88 aa)) lie on the Extracellular side of the membrane. Residues N354 and N368 are each glycosylated (N-linked (GlcNAc...) asparagine). A helical transmembrane segment spans residues 414 to 434 (PLWSVLFFIMLFCLGLSSMFG). Residues 435 to 456 (NMEGVVVPLQDLNITPKKWPKE) are Cytoplasmic-facing. A helical transmembrane segment spans residues 457-477 (LLTGLICLGTYLIAFIFTLNS). Topologically, residues 478-487 (GQYWLSLLDS) are extracellular. The chain crosses the membrane as a helical span at residues 488-508 (FAGSIPLLIIAFCEMFAVVYV). At 509–531 (YGVDRFNKDIEFMIGHKPNIFWQ) the chain is on the cytoplasmic side. A helical membrane pass occupies residues 532 to 552 (VTWRVVSPLIMLVIFLFFFVI). Residues 553–581 (EVNKTLMYSIWDPNYEEFPKSQKIPYPNW) lie on the Extracellular side of the membrane. N555 is a glycosylation site (N-linked (GlcNAc...) asparagine). A helical transmembrane segment spans residues 582–602 (VYAVVVTVAGVPCLSIPCFAI). Topologically, residues 603–634 (YKFIRNCCQKSDDHHGLVNTLSTASVNGDLKN) are cytoplasmic. A Phosphoserine modification is found at S627.

The protein belongs to the sodium:neurotransmitter symporter (SNF) (TC 2.A.22) family. SLC6A19 subfamily. As to quaternary structure, interacts in a tissue-specific manner with ACE2 in small intestine and with CLTRN in the kidney. Interacts with CLTRN; this interaction is required for trafficking of SLC6A19 to the plasma membrane and for its catalytic activation in kidneys. Interacts with ACE2; this interaction is required for trafficking of SLC6A19 to the plasma membrane and for its catalytic activation in intestine. Interacts with ANPEP; the interaction positively regulates its amino acid transporter activity. As to expression, predominantly expressed in kidney and small intestine (at protein level). Expressed in the intestinal brush border (at protein level). Expression not observed in other organs, such as lung, skeletal muscle, brain, liver and pancreas. In kidney, expression is localized in the renal cortex but not in the medulla. Substantial amounts of expression in the proximal tubules. The distal nephron segments and the glomeruli are consistently negative. In the small intestine, expression is exclusively localized in villus enterocytes. High resolution of the hybridization-positive villi reveals a gradient of expression with the highest levels in apical cells. Not detected in crypt cells or in any other cell types of the small intestine.

Its subcellular location is the cell membrane. The enzyme catalyses L-alanine(in) + Na(+)(in) = L-alanine(out) + Na(+)(out). It catalyses the reaction L-cysteine(in) + Na(+)(in) = L-cysteine(out) + Na(+)(out). It carries out the reaction L-glutamine(in) + Na(+)(in) = L-glutamine(out) + Na(+)(out). The catalysed reaction is glycine(in) + Na(+)(in) = glycine(out) + Na(+)(out). The enzyme catalyses L-isoleucine(in) + Na(+)(in) = L-isoleucine(out) + Na(+)(out). It catalyses the reaction L-leucine(in) + Na(+)(in) = L-leucine(out) + Na(+)(out). It carries out the reaction L-methionine(in) + Na(+)(in) = L-methionine(out) + Na(+)(out). The catalysed reaction is L-phenylalanine(in) + Na(+)(in) = L-phenylalanine(out) + Na(+)(out). The enzyme catalyses L-serine(in) + Na(+)(in) = L-serine(out) + Na(+)(out). It catalyses the reaction L-tryptophan(in) + Na(+)(in) = L-tryptophan(out) + Na(+)(out). It carries out the reaction L-tyrosine(in) + Na(+)(in) = L-tyrosine(out) + Na(+)(out). The catalysed reaction is L-valine(in) + Na(+)(in) = L-valine(out) + Na(+)(out). Transporter that mediates resorption of neutral amino acids across the apical membrane of renal and intestinal epithelial cells. This uptake is sodium-dependent and chloride-independent. Requires CLTRN in kidney or ACE2 in intestine for cell surface expression and amino acid transporter activity. This chain is Sodium-dependent neutral amino acid transporter B(0)AT1 (Slc6a19), found in Mus musculus (Mouse).